A 360-amino-acid chain; its full sequence is Nucleoporin SEH1 (360 aa).

WD repeat units lie at residues 10–49, 55–96, 111–152, 160–210, 217–258, and 276–315; these read DHKDLIHDVSFDFHGRRMATCSSDQSVKVWDKSESGEWHC, THSG…SNDK, DSRT…NLSQ, SCKL…RKYA, TVTD…KELT, and NHNSQVWRVSWNITGTVLASSGDDGCVRLWKANYMDNWKC. A Glycyl lysine isopeptide (Lys-Gly) (interchain with G-Cter in SUMO2) cross-link involves residue K12. S190 is modified (phosphoserine). Residues 324–342 show a composition bias toward low complexity; it reads SPVNGSSQQGNSNPSVGSN. A disordered region spans residues 324 to 360; that stretch reads SPVNGSSQQGNSNPSVGSNIPSLQNSLNGSSAGRKHS. Over residues 343 to 354 the composition is skewed to polar residues; sequence IPSLQNSLNGSS.

It belongs to the WD repeat SEC13 family. As to quaternary structure, component of the Nup107-160 subcomplex of the nuclear pore complex (NPC). The Nup107-160 subcomplex includes NUP160, NUP133, NUP107, NUP98, NUP85, NUP43, NUP37, SEH1 and SEC13. The SEH1 subunit appears to be only weakly associated with the Nup107-160 subcomplex. Component of the GATOR2 subcomplex, composed of MIOS, SEC13, SEH1L, WDR24 and WDR59. The GATOR2 complex interacts with CASTOR1 and CASTOR2; the interaction is negatively regulated by arginine. The GATOR2 complex interacts with SESN1, SESN2 and SESN3; the interaction is negatively regulated by amino acids. SESN1, SESN2 and SESN3 convey leucine availability via direct interaction with SEH1L and WDR24.

The protein resides in the chromosome. Its subcellular location is the centromere. It localises to the kinetochore. The protein localises to the nucleus. It is found in the nuclear pore complex. The protein resides in the lysosome membrane. The GATOR2 complex is negatively regulated by the upstream amino acid sensors CASTOR1 and SESN2, which sequester the GATOR2 complex in absence of amino acids. In the presence of abundant amino acids, GATOR2 is released from CASTOR1 and SESN2 and activated. In terms of biological role, component of the Nup107-160 subcomplex of the nuclear pore complex (NPC). The Nup107-160 subcomplex is required for the assembly of a functional NPC. The Nup107-160 subcomplex is also required for normal kinetochore microtubule attachment, mitotic progression and chromosome segregation. This subunit plays a role in recruitment of the Nup107-160 subcomplex to the kinetochore. Functionally, as a component of the GATOR2 complex, functions as an activator of the amino acid-sensing branch of the mTORC1 signaling pathway. The GATOR2 complex indirectly activates mTORC1 through the inhibition of the GATOR1 subcomplex. GATOR2 probably acts as an E3 ubiquitin-protein ligase toward GATOR1. In the presence of abundant amino acids, the GATOR2 complex mediates ubiquitination of the NPRL2 core component of the GATOR1 complex, leading to GATOR1 inactivation. In the absence of amino acids, GATOR2 is inhibited, activating the GATOR1 complex. Within the GATOR2 complex, SEC13 and SEH1L are required to stabilize the complex. In Bos taurus (Bovine), this protein is Nucleoporin SEH1 (SEH1L).